Consider the following 270-residue polypeptide: Replication protein A 32 kDa subunit (270 aa).

Met-1 is modified (N-acetylmethionine). Residues Ser-4 and Ser-8 each carry the phosphoserine; by PRKDC modification. The tract at residues Tyr-20–Val-41 is disordered. Thr-21 bears the Phosphothreonine; by PRKDC mark. Ser-23 is modified (phosphoserine; by CDK2). Ser-29 bears the Phosphoserine; by CDK1 mark. Ser-33 bears the Phosphoserine; by PRKDC mark. Glycyl lysine isopeptide (Lys-Gly) (interchain with G-Cter in ubiquitin) cross-links involve residues Lys-37 and Lys-38. Positions Val-74–Pro-148 form a DNA-binding region, OB. Positions Lys-171–Gly-192 are disordered. Positions Gly-187–Glu-270 are interaction with RAD52, TIPIN, UNG and XPA.

It belongs to the replication factor A protein 2 family. In terms of assembly, component of the replication protein A complex (RPA/RP-A), a heterotrimeric complex composed of RPA1, RPA2 and RPA3. Interacts with PRPF19; the PRP19-CDC5L complex is recruited to the sites of DNA repair where it ubiquitinates the replication protein A complex (RPA). Interacts with SERTAD3. Interacts with TIPIN. Interacts with TIMELESS. Interacts with PPP4R2; the interaction is direct, DNA damage-dependent and mediates the recruitment of the PP4 catalytic subunit PPP4C. Interacts (hyperphosphorylated) with RAD51. Interacts with SMARCAL1; the interaction is direct and mediates the recruitment to the RPA complex of SMARCAL1. Interacts with RAD52 and XPA; those interactions are direct and associate RAD52 and XPA to the RPA complex. Interacts with FBH1. Interacts with ETAA1; the interaction is direct and promotes ETAA1 recruitment at stalled replication forks. Interacts with DDI2. Interacts (in unphosphorylated form via N-terminus) with EIF4EBP3; the interaction enhances EIF4EBP3-mediated inhibition of EIF4E-mediated mRNA nuclear export. Interacts with nuclear UNG (isoform 2); this interaction mediates UNG recruitment to RPA-coated single-stranded DNA at stalled replication forks. In terms of processing, differentially phosphorylated throughout the cell cycle, becoming phosphorylated at the G1-S transition and dephosphorylated in late mitosis. Mainly phosphorylated at Ser-23 and Ser-29, by cyclin A-CDK2 and cyclin B-CDK1, respectively during DNA replication and mitosis. Dephosphorylation may require the serine/threonine-protein phosphatase 4. Phosphorylation at Ser-23 and Ser-29 is a prerequisite for further phosphorylation. Becomes hyperphosphorylated on additional residues including Ser-4, Ser-8, Thr-21 and Ser-33 in response to DNA damage. Hyperphosphorylation is mediated by ATM, ATR and PRKDC. Primarily recruited to DNA repair nuclear foci as a hypophosphorylated form it undergoes subsequent hyperphosphorylation, catalyzed by ATR. Hyperphosphorylation is required for RAD51 recruitment to chromatin and efficient DNA repair. Phosphorylation at Thr-21 depends upon RFWD3 presence. DNA damage-induced 'Lys-63'-linked polyubiquitination by PRPF19 mediates ATRIP recruitment to the RPA complex at sites of DNA damage and activation of ATR. Ubiquitinated by RFWD3 at stalled replication forks in response to DNA damage: ubiquitination by RFWD3 does not lead to degradation by the proteasome and promotes removal of the RPA complex from stalled replication forks, promoting homologous recombination.

Its subcellular location is the nucleus. It localises to the PML body. Functionally, as part of the heterotrimeric replication protein A complex (RPA/RP-A), binds and stabilizes single-stranded DNA intermediates, that form during DNA replication or upon DNA stress. It prevents their reannealing and in parallel, recruits and activates different proteins and complexes involved in DNA metabolism. Thereby, it plays an essential role both in DNA replication and the cellular response to DNA damage. In the cellular response to DNA damage, the RPA complex controls DNA repair and DNA damage checkpoint activation. Through recruitment of ATRIP activates the ATR kinase a master regulator of the DNA damage response. It is required for the recruitment of the DNA double-strand break repair factors RAD51 and RAD52 to chromatin in response to DNA damage. Also recruits to sites of DNA damage proteins like XPA and XPG that are involved in nucleotide excision repair and is required for this mechanism of DNA repair. Also plays a role in base excision repair (BER) probably through interaction with UNG. Also recruits SMARCAL1/HARP, which is involved in replication fork restart, to sites of DNA damage. May also play a role in telomere maintenance. The chain is Replication protein A 32 kDa subunit from Mus musculus (Mouse).